The sequence spans 92 residues: Dolichol-phosphate mannosyltransferase subunit 3 (92 aa).

2 helical membrane-spanning segments follow: residues 8–28 (LWGLAILGSTWVALTTGALGL) and 37–57 (VLWPLPAYLLVSAGCYALGTV).

This sequence belongs to the DPM3 family. In terms of assembly, component of the dolichol-phosphate mannose (DPM) synthase complex composed of DPM1, DPM2 and DPM3; within the complex, associates with DPM1 via its C-terminal domain and with DPM2 via its N-terminal portion. This interaction stabilizes DPM1 protein.

It localises to the endoplasmic reticulum membrane. Its pathway is protein modification; protein glycosylation. Stabilizer subunit of the dolichol-phosphate mannose (DPM) synthase complex; tethers catalytic subunit DPM1 to the endoplasmic reticulum. The chain is Dolichol-phosphate mannosyltransferase subunit 3 (DPM3) from Homo sapiens (Human).